Here is a 406-residue protein sequence, read N- to C-terminus: Tyrosine--tRNA ligase (406 aa).

The 'HIGH' region signature appears at 51 to 60 (PTAPDLHLGH). The 'KMSKS' region signature appears at 236–240 (KMSKS). Lysine 239 contacts ATP. The S4 RNA-binding domain occupies 345-405 (IWICKAMVEG…GKRKFLRLIV (61 aa)).

It belongs to the class-I aminoacyl-tRNA synthetase family. TyrS type 2 subfamily. Homodimer.

It localises to the cytoplasm. It carries out the reaction tRNA(Tyr) + L-tyrosine + ATP = L-tyrosyl-tRNA(Tyr) + AMP + diphosphate + H(+). Functionally, catalyzes the attachment of tyrosine to tRNA(Tyr) in a two-step reaction: tyrosine is first activated by ATP to form Tyr-AMP and then transferred to the acceptor end of tRNA(Tyr). In Wolinella succinogenes (strain ATCC 29543 / DSM 1740 / CCUG 13145 / JCM 31913 / LMG 7466 / NCTC 11488 / FDC 602W) (Vibrio succinogenes), this protein is Tyrosine--tRNA ligase.